We begin with the raw amino-acid sequence, 167 residues long: Sporulation membrane protein YtrI (167 aa).

A helical transmembrane segment spans residues Phe-15–Gly-35.

The protein resides in the cell membrane. Involved in sporulation. This chain is Sporulation membrane protein YtrI (ytrI), found in Bacillus subtilis (strain 168).